The primary structure comprises 664 residues: Alkaline/neutral invertase C, mitochondrial (664 aa).

A phosphoserine mark is found at serine 41, serine 125, and serine 657.

It belongs to the glycosyl hydrolase 100 family. As to expression, expressed in seedlings, roots and flowers.

It localises to the mitochondrion. The catalysed reaction is Hydrolysis of terminal non-reducing beta-D-fructofuranoside residues in beta-D-fructofuranosides.. In terms of biological role, mitochondrial invertase that cleaves sucrose into glucose and fructose and is involved in the regulation of aerial tissue development and floral transition. May be modulating hormone balance in relation to the radicle emergence. The sequence is that of Alkaline/neutral invertase C, mitochondrial from Arabidopsis thaliana (Mouse-ear cress).